Here is a 417-residue protein sequence, read N- to C-terminus: Serine hydroxymethyltransferase (417 aa).

(6S)-5,6,7,8-tetrahydrofolate-binding positions include leucine 120 and 124–126 (GHL). Position 229 is an N6-(pyridoxal phosphate)lysine (lysine 229).

This sequence belongs to the SHMT family. As to quaternary structure, homodimer. The cofactor is pyridoxal 5'-phosphate.

It is found in the cytoplasm. It carries out the reaction (6R)-5,10-methylene-5,6,7,8-tetrahydrofolate + glycine + H2O = (6S)-5,6,7,8-tetrahydrofolate + L-serine. It participates in one-carbon metabolism; tetrahydrofolate interconversion. It functions in the pathway amino-acid biosynthesis; glycine biosynthesis; glycine from L-serine: step 1/1. Catalyzes the reversible interconversion of serine and glycine with tetrahydrofolate (THF) serving as the one-carbon carrier. This reaction serves as the major source of one-carbon groups required for the biosynthesis of purines, thymidylate, methionine, and other important biomolecules. Also exhibits THF-independent aldolase activity toward beta-hydroxyamino acids, producing glycine and aldehydes, via a retro-aldol mechanism. The polypeptide is Serine hydroxymethyltransferase (Anaeromyxobacter sp. (strain K)).